A 468-amino-acid chain; its full sequence is Glutamate--tRNA ligase 2 (468 aa).

Positions 9–19 (PSPTGHLHIGG) match the 'HIGH' region motif. Zn(2+) contacts are provided by cysteine 98, cysteine 100, cysteine 125, and histidine 127. Positions 236–240 (RLSKR) match the 'KMSKS' region motif. Residue lysine 239 participates in ATP binding.

The protein belongs to the class-I aminoacyl-tRNA synthetase family. Glutamate--tRNA ligase type 1 subfamily. As to quaternary structure, monomer. Zn(2+) is required as a cofactor.

It is found in the cytoplasm. It carries out the reaction tRNA(Glu) + L-glutamate + ATP = L-glutamyl-tRNA(Glu) + AMP + diphosphate. Functionally, catalyzes the attachment of glutamate to tRNA(Glu) in a two-step reaction: glutamate is first activated by ATP to form Glu-AMP and then transferred to the acceptor end of tRNA(Glu). In Methylococcus capsulatus (strain ATCC 33009 / NCIMB 11132 / Bath), this protein is Glutamate--tRNA ligase 2.